The primary structure comprises 892 residues: Alanine--tRNA ligase (892 aa).

4 residues coordinate Zn(2+): His594, His598, Cys702, and His706.

Belongs to the class-II aminoacyl-tRNA synthetase family. Requires Zn(2+) as cofactor.

Its subcellular location is the cytoplasm. The enzyme catalyses tRNA(Ala) + L-alanine + ATP = L-alanyl-tRNA(Ala) + AMP + diphosphate. In terms of biological role, catalyzes the attachment of alanine to tRNA(Ala) in a two-step reaction: alanine is first activated by ATP to form Ala-AMP and then transferred to the acceptor end of tRNA(Ala). Also edits incorrectly charged Ser-tRNA(Ala) and Gly-tRNA(Ala) via its editing domain. This is Alanine--tRNA ligase from Pyrobaculum aerophilum (strain ATCC 51768 / DSM 7523 / JCM 9630 / CIP 104966 / NBRC 100827 / IM2).